The following is a 76-amino-acid chain: MGGLSIWHWLIVLLIVALVFGTKKLRNIGNDLGSAVKGFKDGMKEGEAPADAQQLPRSGSVDVNAKETTRSDSNKA.

A helical membrane pass occupies residues 1-21 (MGGLSIWHWLIVLLIVALVFG). Residues 43-76 (MKEGEAPADAQQLPRSGSVDVNAKETTRSDSNKA) are disordered. Positions 64 to 76 (NAKETTRSDSNKA) are enriched in basic and acidic residues.

It belongs to the TatA/E family. The Tat system comprises two distinct complexes: a TatABC complex, containing multiple copies of TatA, TatB and TatC subunits, and a separate TatA complex, containing only TatA subunits. Substrates initially bind to the TatABC complex, which probably triggers association of the separate TatA complex to form the active translocon.

Its subcellular location is the cell inner membrane. Functionally, part of the twin-arginine translocation (Tat) system that transports large folded proteins containing a characteristic twin-arginine motif in their signal peptide across membranes. TatA could form the protein-conducting channel of the Tat system. The sequence is that of Sec-independent protein translocase protein TatA from Burkholderia lata (strain ATCC 17760 / DSM 23089 / LMG 22485 / NCIMB 9086 / R18194 / 383).